The chain runs to 468 residues: MGTQEGWCLLLCLALSGAAETKPHPAERQWRAADVVLDCFLAKDGGHRAALASSEDRARASLVLKQVPVLDDGSLEDFTDFQGGTLAQDDPPIIFEASVDLVQIPQAEALLHADCSGKEVTCEISRYFLQMKGTTVETEAWFMANVQVSGGGPSISMVMKTPRDAKNEALWHPTLNLPLSPQGTVRTAVEFQVMTQTQSLSFLLGSSASLDCGFSMTPGLDLISVEWRLQHKGRGQLVYSWTTGQGQAVRKGATLEPEQLGMARNASLTLPSLTIQDEGTYICQITTSLYRAQQIIQLNIQASPKVRLSLANEALLPTLICNIAGYYPLDVVVTWTREELGGSPAQVSGASFSSLRQSVAGTYSISSSLTAEPGSAGATYTCQVMHISLEEPLGASTQVVPPERRTALGVIFASSLFLLALLFLGLQRRQAPTRVGLLQAERWKTTSCADTQSSHLHEDRTACVSQPS.

An N-terminal signal peptide occupies residues 1 to 18 (MGTQEGWCLLLCLALSGA). The Lumenal segment spans residues 19–405 (AETKPHPAER…STQVVPPERR (387 aa)). The 117-residue stretch at 181–297 (PQGTVRTAVE…SLYRAQQIIQ (117 aa)) folds into the Ig-like V-type domain. Intrachain disulfides connect cysteine 212–cysteine 283 and cysteine 321–cysteine 382. Residue asparagine 265 is glycosylated (N-linked (GlcNAc...) asparagine). The Ig-like C1-type domain maps to 304 to 394 (PKVRLSLANE…MHISLEEPLG (91 aa)). The helical transmembrane segment at 406–426 (TALGVIFASSLFLLALLFLGL) threads the bilayer. Topologically, residues 427-468 (QRRQAPTRVGLLQAERWKTTSCADTQSSHLHEDRTACVSQPS) are cytoplasmic.

In terms of assembly, interacts with peptide-free HLA-A*02-B2M complexes or those loaded with low affinity peptides, likely facilitating peptide exchange onto higher affinity peptides. Interacts with MR1 in a ligand-independent way; this interaction may stabilize MR1 pool and facilitate ligand loading and dissociation.

It is found in the cell membrane. Its subcellular location is the endoplasmic reticulum membrane. The protein resides in the microsome membrane. It localises to the golgi apparatus membrane. In terms of biological role, component of the antigen processing and presentation pathway, which binds to MHC class I coupled with beta2-microglobulin/B2M. Association between TAPBPR and MHC class I occurs in the absence of a functional peptide-loading complex (PLC). Expression seems to slow down and down-regulate MHC class I surface expression. This is Tapasin-related protein (TAPBPL) from Pongo abelii (Sumatran orangutan).